The sequence spans 957 residues: SH3 domain-binding protein 4 (957 aa).

Positions 54-113 (DNVKEVVAIKDYCPNNFTTLKFSKGEHLYVLDTSGGEWWYAHNTTEMGYIPSSYVQPLNY) constitute an SH3 1 domain. The ZU5 domain maps to 312–449 (TSIVCRLDSS…LEPVMYVVMV (138 aa)). Residues 649-719 (TSLKYGKLLK…HAKNVLVVGK (71 aa)) enclose the SH3 2 domain.

Homodimer or homooligomer.

Its subcellular location is the membrane. It localises to the clathrin-coated pit. The protein resides in the cytoplasmic vesicle. The protein localises to the clathrin-coated vesicle. It is found in the nucleus. Its function is as follows. Possible role in regulating endocytosis of the transferrin receptor at the plasma membrane. Alternatively, may function as a negative regulator of the amino acid-induced TOR signaling by inhibiting the formation of active Rag GTPase complexes. Preferentially binds inactive Rag GTPase complexes and prevents their interaction with the mTORC1 complex inhibiting its relocalization to lysosomes and its activation. Thereby, may indirectly regulate cell growth, proliferation and autophagy. This Xenopus tropicalis (Western clawed frog) protein is SH3 domain-binding protein 4 (sh3bp4).